The sequence spans 304 residues: Nucleotide-binding protein ROP_69550 (304 aa).

24 to 31 serves as a coordination point for ATP; that stretch reads GLSGAGLQ. Residue 75–78 coordinates GTP; the sequence is DVRS.

Belongs to the RapZ-like family.

In terms of biological role, displays ATPase and GTPase activities. This Rhodococcus opacus (strain B4) protein is Nucleotide-binding protein ROP_69550.